We begin with the raw amino-acid sequence, 501 residues long: Group 3 secretory phospholipase A2 (501 aa).

The signal sequence occupies residues Met-1–Gly-19. Positions Arg-119–Val-139 are disordered. The interval Gly-150–Thr-291 is phospholipase A2-like. 3 residues coordinate Ca(2+): Trp-158, Gly-160, and Gly-162. 4 disulfide bridges follow: Cys-159–Cys-181, Cys-180–Cys-220, Cys-187–Cys-213, and Cys-211–Cys-244. The N-linked (GlcNAc...) asparagine glycan is linked to Asn-167. His-184 is a catalytic residue. Asp-185 is a Ca(2+) binding site. Residue Asp-214 is part of the active site. N-linked (GlcNAc...) asparagine glycosylation occurs at Asn-280. Positions Ser-284 to Ala-298 are enriched in polar residues. The tract at residues Ser-284–Asp-339 is disordered. N-linked (GlcNAc...) asparagine glycosylation is found at Asn-325 and Asn-403.

It belongs to the phospholipase A2 family. Ca(2+) serves as cofactor. In terms of processing, N-glycosylation does not affect the catalytic activity, but is required for proper secretion. A nonglycosylated form was observed in several cell types. Post-translationally, in several cell types, the N- and C-termini are cleaved off.

Its subcellular location is the secreted. The protein resides in the cell membrane. The protein localises to the cytoplasm. It localises to the cytoskeleton. It is found in the microtubule organizing center. Its subcellular location is the centrosome. The protein resides in the centriole. The protein localises to the recycling endosome. The enzyme catalyses a 1,2-diacyl-sn-glycero-3-phosphocholine + H2O = a 1-acyl-sn-glycero-3-phosphocholine + a fatty acid + H(+). It carries out the reaction 1-hexadecanoyl-2-(9Z,12Z-octadecadienoyl)-sn-glycero-3-phosphocholine + H2O = (9Z,12Z)-octadecadienoate + 1-hexadecanoyl-sn-glycero-3-phosphocholine + H(+). It catalyses the reaction 1-hexadecanoyl-2-(5Z,8Z,11Z,14Z-eicosatetraenoyl)-sn-glycero-3-phosphocholine + H2O = 1-hexadecanoyl-sn-glycero-3-phosphocholine + (5Z,8Z,11Z,14Z)-eicosatetraenoate + H(+). The catalysed reaction is 1-hexadecanoyl-2-(9Z,12Z-octadecadienoyl)-sn-glycero-3-phosphoethanolamine + H2O = 1-hexadecanoyl-sn-glycero-3-phosphoethanolamine + (9Z,12Z)-octadecadienoate + H(+). The enzyme catalyses 1-hexadecanoyl-2-(5Z,8Z,11Z,14Z-eicosatetraenoyl)-sn-glycero-3-phosphoethanolamine + H2O = 1-hexadecanoyl-sn-glycero-3-phosphoethanolamine + (5Z,8Z,11Z,14Z)-eicosatetraenoate + H(+). Functionally, secretory calcium-dependent phospholipase A2 that primarily targets extracellular phospholipids. Hydrolyzes the ester bond of the fatty acyl group attached at sn-2 position of phospholipids without apparent head group selectivity. Contributes to phospholipid remodeling of low-density lipoprotein (LDL) and high-density lipoprotein (HDL) particles. Hydrolyzes LDL phospholipids releasing unsaturated fatty acids that regulate macrophage differentiation toward foam cells. May act in an autocrine and paracrine manner. Secreted by immature mast cells, acts on nearby fibroblasts upstream to PTDGS to synthesize prostaglandin D2 (PGD2), which in turn promotes mast cell maturation and degranulation via PTGDR. Secreted by epididymal epithelium, acts on immature sperm cells within the duct, modulating the degree of unsaturation of the fatty acyl components of phosphatidylcholines required for acrosome assembly and sperm cell motility. Facilitates the replacement of fatty acyl chains in phosphatidylcholines in sperm membranes from omega-6 and omega-9 to omega-3 polyunsaturated fatty acids (PUFAs). Coupled to lipoxygenase pathway, may process omega-6 PUFAs to generate oxygenated lipid mediators in the male reproductive tract. At pericentrosomal preciliary compartment, negatively regulates ciliogenesis likely by regulating endocytotic recycling of ciliary membrane protein. Coupled to cyclooxygenase pathway provides arachidonate to generate prostaglandin E2 (PGE2), a potent immunomodulatory lipid in inflammation and tumorigenesis. At colonic epithelial barrier, preferentially hydrolyzes phospholipids having arachidonate and docosahexaenoate at sn-2 position, contributing to the generation of oxygenated metabolites involved in colonic stem cell homeostasis. Releases C16:0 and C18:0 lysophosphatidylcholine subclasses from neuron plasma membranes and promotes neurite outgrowth and neuron survival. This chain is Group 3 secretory phospholipase A2 (PLA2G3), found in Bos taurus (Bovine).